The sequence spans 317 residues: Ribosomal protein L11 methyltransferase (317 aa).

Thr-162, Gly-183, Asp-205, and Asn-248 together coordinate S-adenosyl-L-methionine.

This sequence belongs to the methyltransferase superfamily. PrmA family.

The protein resides in the cytoplasm. It carries out the reaction L-lysyl-[protein] + 3 S-adenosyl-L-methionine = N(6),N(6),N(6)-trimethyl-L-lysyl-[protein] + 3 S-adenosyl-L-homocysteine + 3 H(+). In terms of biological role, methylates ribosomal protein L11. In Alkaliphilus metalliredigens (strain QYMF), this protein is Ribosomal protein L11 methyltransferase.